Reading from the N-terminus, the 84-residue chain is Cell division topological specificity factor (84 aa).

It belongs to the MinE family.

In terms of biological role, prevents the cell division inhibition by proteins MinC and MinD at internal division sites while permitting inhibition at polar sites. This ensures cell division at the proper site by restricting the formation of a division septum at the midpoint of the long axis of the cell. The protein is Cell division topological specificity factor of Ralstonia nicotianae (strain ATCC BAA-1114 / GMI1000) (Ralstonia solanacearum).